The sequence spans 94 residues: Large ribosomal subunit protein uL23 (94 aa).

Belongs to the universal ribosomal protein uL23 family. In terms of assembly, part of the 50S ribosomal subunit. Contacts protein L29, and trigger factor when it is bound to the ribosome.

In terms of biological role, one of the early assembly proteins it binds 23S rRNA. One of the proteins that surrounds the polypeptide exit tunnel on the outside of the ribosome. Forms the main docking site for trigger factor binding to the ribosome. The polypeptide is Large ribosomal subunit protein uL23 (Roseiflexus sp. (strain RS-1)).